The following is an 890-amino-acid chain: Exo-beta-D-glucosaminidase (890 aa).

The N-terminal stretch at methionine 1–alanine 18 is a signal peptide. The propeptide occupies alanine 19–lysine 26. Asparagine 194, asparagine 334, and asparagine 438 each carry an N-linked (GlcNAc...) asparagine glycan. Aspartate 462 acts as the Proton donor in catalysis. The active-site Nucleophile is the glutamate 537. Asparagine 576 and asparagine 687 each carry an N-linked (GlcNAc...) asparagine glycan.

Belongs to the glycosyl hydrolase 2 family. In terms of assembly, monomer.

The protein resides in the secreted. Its subcellular location is the extracellular space. It catalyses the reaction Hydrolysis of chitosan or chitosan oligosaccharides to remove successive D-glucosamine residues from the non-reducing termini.. Functionally, hydrolyzes chitosan and chitooligosaccharides with retention of anomeric configuration. Has no activity against beta-D-galactoside, beta-D-glucuronide, beta-D-mannoside, chitin, glycol chitosan, cellulose, N,N'-diacetylchitibiose and pNP-GlcNAc. The sequence is that of Exo-beta-D-glucosaminidase from Hypocrea virens (Gliocladium virens).